Consider the following 324-residue polypeptide: o-succinylbenzoate synthase (324 aa).

Lys-135 serves as the catalytic Proton donor. Residues Asp-163, Glu-192, and Asp-215 each contribute to the Mg(2+) site. Residue Lys-237 is the Proton acceptor of the active site.

The protein belongs to the mandelate racemase/muconate lactonizing enzyme family. MenC type 1 subfamily. A divalent metal cation serves as cofactor.

It catalyses the reaction (1R,6R)-6-hydroxy-2-succinyl-cyclohexa-2,4-diene-1-carboxylate = 2-succinylbenzoate + H2O. The protein operates within quinol/quinone metabolism; 1,4-dihydroxy-2-naphthoate biosynthesis; 1,4-dihydroxy-2-naphthoate from chorismate: step 4/7. It functions in the pathway quinol/quinone metabolism; menaquinone biosynthesis. In terms of biological role, converts 2-succinyl-6-hydroxy-2,4-cyclohexadiene-1-carboxylate (SHCHC) to 2-succinylbenzoate (OSB). This is o-succinylbenzoate synthase from Aliivibrio fischeri (strain MJ11) (Vibrio fischeri).